We begin with the raw amino-acid sequence, 312 residues long: Malate dehydrogenase (312 aa).

NAD(+) contacts are provided by residues 7–13 (GAAGGIG) and aspartate 34. Substrate is bound by residues arginine 81 and arginine 87. NAD(+) is bound by residues asparagine 94 and 117 to 119 (ITN). Substrate contacts are provided by asparagine 119 and arginine 153. The Proton acceptor role is filled by histidine 177. Methionine 227 serves as a coordination point for NAD(+).

This sequence belongs to the LDH/MDH superfamily. MDH type 1 family. As to quaternary structure, homodimer.

It carries out the reaction (S)-malate + NAD(+) = oxaloacetate + NADH + H(+). Its function is as follows. Catalyzes the reversible oxidation of malate to oxaloacetate. This chain is Malate dehydrogenase, found in Salmonella arizonae (strain ATCC BAA-731 / CDC346-86 / RSK2980).